We begin with the raw amino-acid sequence, 26 residues long: Cytochrome c oxidase subunit 2 (26 aa).

This sequence belongs to the cytochrome c oxidase subunit 2 family. As to quaternary structure, component of the cytochrome c oxidase (complex IV, CIV), a multisubunit enzyme composed of a catalytic core of 3 subunits and several supernumerary subunits. The complex exists as a monomer or a dimer and forms supercomplexes (SCs) in the inner mitochondrial membrane with ubiquinol-cytochrome c oxidoreductase (cytochrome b-c1 complex, complex III, CIII). Requires Cu cation as cofactor.

Its subcellular location is the mitochondrion inner membrane. The catalysed reaction is 4 Fe(II)-[cytochrome c] + O2 + 8 H(+)(in) = 4 Fe(III)-[cytochrome c] + 2 H2O + 4 H(+)(out). Its function is as follows. Component of the cytochrome c oxidase, the last enzyme in the mitochondrial electron transport chain which drives oxidative phosphorylation. The respiratory chain contains 3 multisubunit complexes succinate dehydrogenase (complex II, CII), ubiquinol-cytochrome c oxidoreductase (cytochrome b-c1 complex, complex III, CIII) and cytochrome c oxidase (complex IV, CIV), that cooperate to transfer electrons derived from NADH and succinate to molecular oxygen, creating an electrochemical gradient over the inner membrane that drives transmembrane transport and the ATP synthase. Cytochrome c oxidase is the component of the respiratory chain that catalyzes the reduction of oxygen to water. Electrons originating from reduced cytochrome c in the intermembrane space (IMS) are transferred via the dinuclear copper A center (CU(A)) of subunit 2 and heme A of subunit 1 to the active site in subunit 1, a binuclear center (BNC) formed by heme A3 and copper B (CU(B)). The BNC reduces molecular oxygen to 2 water molecules using 4 electrons from cytochrome c in the IMS and 4 protons from the mitochondrial matrix. In Solanum tuberosum (Potato), this protein is Cytochrome c oxidase subunit 2 (COX2).